The chain runs to 25 residues: Androctonin (25 aa).

2 disulfide bridges follow: Cys4-Cys20 and Cys10-Cys16.

It localises to the secreted. Functionally, active against both bacteria (Gram-positive and Gram-negative) and filamentous fungi. Acts on the membrane of the bacterial cells. It destabilize a membrane by modifying its properties. In Androctonus australis (Sahara scorpion), this protein is Androctonin.